A 148-amino-acid chain; its full sequence is Ribonuclease H (148 aa).

An RNase H type-1 domain is found at 3–144; it reads AEETVEIFTD…ADALANRGIE (142 aa). Mg(2+) contacts are provided by Asp-12, Glu-50, Asp-72, and Asp-136. A disordered region spans residues 129–148; that stretch reads HPENERADALANRGIEELKG.

It belongs to the RNase H family. In terms of assembly, monomer. The cofactor is Mg(2+).

Its subcellular location is the cytoplasm. The enzyme catalyses Endonucleolytic cleavage to 5'-phosphomonoester.. Its function is as follows. Endonuclease that specifically degrades the RNA of RNA-DNA hybrids. The chain is Ribonuclease H from Dechloromonas aromatica (strain RCB).